The following is a 151-amino-acid chain: MKQEIIEKVKEMLQPLLEERGLKLVDIEYVTEGKPVLRIYIYNPEGTTIEDCEWISRRIGALLDIEDLIPVSYTLEVSSPGLERKLKNVEEYDIFKGRDIKIVLKEPVDKKNVIKGVLKGREDNNIIVEEEGEEVRIPLENIARANLEFKH.

Belongs to the RimP family.

It localises to the cytoplasm. In terms of biological role, required for maturation of 30S ribosomal subunits. The chain is Ribosome maturation factor RimP from Persephonella marina (strain DSM 14350 / EX-H1).